Reading from the N-terminus, the 485-residue chain is UDP-N-acetylmuramoyl-L-alanyl-D-glutamate--2,6-diaminopimelate ligase (485 aa).

Serine 30 provides a ligand contact to UDP-N-acetyl-alpha-D-muramoyl-L-alanyl-D-glutamate. 113 to 119 (GTNGKTT) contributes to the ATP binding site. Residues 155–156 (TT), serine 182, and arginine 190 contribute to the UDP-N-acetyl-alpha-D-muramoyl-L-alanyl-D-glutamate site. Lysine 222 is subject to N6-carboxylysine. Residues arginine 381, 405 to 408 (DNPR), glycine 455, and glutamate 459 contribute to the meso-2,6-diaminopimelate site. The Meso-diaminopimelate recognition motif signature appears at 405 to 408 (DNPR).

This sequence belongs to the MurCDEF family. MurE subfamily. It depends on Mg(2+) as a cofactor. Carboxylation is probably crucial for Mg(2+) binding and, consequently, for the gamma-phosphate positioning of ATP.

It is found in the cytoplasm. It catalyses the reaction UDP-N-acetyl-alpha-D-muramoyl-L-alanyl-D-glutamate + meso-2,6-diaminopimelate + ATP = UDP-N-acetyl-alpha-D-muramoyl-L-alanyl-gamma-D-glutamyl-meso-2,6-diaminopimelate + ADP + phosphate + H(+). It participates in cell wall biogenesis; peptidoglycan biosynthesis. In terms of biological role, catalyzes the addition of meso-diaminopimelic acid to the nucleotide precursor UDP-N-acetylmuramoyl-L-alanyl-D-glutamate (UMAG) in the biosynthesis of bacterial cell-wall peptidoglycan. The chain is UDP-N-acetylmuramoyl-L-alanyl-D-glutamate--2,6-diaminopimelate ligase from Clostridium tetani (strain Massachusetts / E88).